Reading from the N-terminus, the 218-residue chain is Small ribosomal subunit protein uS3 (218 aa).

Residues 38–106 (IRKFIATKLA…RVHINIVEIK (69 aa)) form the KH type-2 domain.

The protein belongs to the universal ribosomal protein uS3 family. As to quaternary structure, part of the 30S ribosomal subunit. Forms a tight complex with proteins S10 and S14.

Functionally, binds the lower part of the 30S subunit head. Binds mRNA in the 70S ribosome, positioning it for translation. In Enterococcus faecalis (strain ATCC 700802 / V583), this protein is Small ribosomal subunit protein uS3.